A 200-amino-acid polypeptide reads, in one-letter code: Probable GTP-binding protein EngB (200 aa).

One can recognise an EngB-type G domain in the interval 22–199; the sequence is GLDEIALAGR…KDWIQARLYE (178 aa). Residues 30 to 37, 57 to 61, 78 to 81, 145 to 148, and 178 to 180 each bind GTP; these read GRSNVGKS, GKTQT, DVPG, TKMD, and FSS. Residues Ser37 and Thr59 each coordinate Mg(2+).

This sequence belongs to the TRAFAC class TrmE-Era-EngA-EngB-Septin-like GTPase superfamily. EngB GTPase family. Mg(2+) is required as a cofactor.

Functionally, necessary for normal cell division and for the maintenance of normal septation. This Lactobacillus delbrueckii subsp. bulgaricus (strain ATCC 11842 / DSM 20081 / BCRC 10696 / JCM 1002 / NBRC 13953 / NCIMB 11778 / NCTC 12712 / WDCM 00102 / Lb 14) protein is Probable GTP-binding protein EngB.